A 945-amino-acid chain; its full sequence is Protein translocase subunit SecA (945 aa).

ATP-binding positions include Q90, 108–112 (GEGKT), and D509. The tract at residues 533 to 568 (VKPEDGHKPPVPLQRRSESSGFGEDKDVTTDNSKPL) is disordered. Basic and acidic residues predominate over residues 547 to 561 (RRSESSGFGEDKDVT).

This sequence belongs to the SecA family. Monomer and homodimer. Part of the essential Sec protein translocation apparatus which comprises SecA, SecYEG and auxiliary proteins SecDF. Other proteins may also be involved.

The protein resides in the cell inner membrane. It is found in the cellular thylakoid membrane. Its subcellular location is the cytoplasm. The enzyme catalyses ATP + H2O + cellular proteinSide 1 = ADP + phosphate + cellular proteinSide 2.. Functionally, part of the Sec protein translocase complex. Interacts with the SecYEG preprotein conducting channel. Has a central role in coupling the hydrolysis of ATP to the transfer of proteins into and across the cell membrane, serving as an ATP-driven molecular motor driving the stepwise translocation of polypeptide chains across the membrane. In terms of biological role, probably participates in protein translocation into and across both the cytoplasmic and thylakoid membranes in cyanobacterial cells. The protein is Protein translocase subunit SecA of Prochlorococcus marinus (strain MIT 9211).